We begin with the raw amino-acid sequence, 323 residues long: 4-diphosphocytidyl-2-C-methyl-D-erythritol kinase (323 aa).

The active site involves Lys-25. 110–120 (PVAGGMAGGSA) contributes to the ATP binding site. Asp-152 is a catalytic residue.

It belongs to the GHMP kinase family. IspE subfamily.

It catalyses the reaction 4-CDP-2-C-methyl-D-erythritol + ATP = 4-CDP-2-C-methyl-D-erythritol 2-phosphate + ADP + H(+). It participates in isoprenoid biosynthesis; isopentenyl diphosphate biosynthesis via DXP pathway; isopentenyl diphosphate from 1-deoxy-D-xylulose 5-phosphate: step 3/6. Catalyzes the phosphorylation of the position 2 hydroxy group of 4-diphosphocytidyl-2C-methyl-D-erythritol. The polypeptide is 4-diphosphocytidyl-2-C-methyl-D-erythritol kinase (Mycobacterium leprae (strain Br4923)).